The sequence spans 1276 residues: cGMP-specific 3',5'-cyclic phosphodiesterase (1276 aa).

3 disordered regions span residues 1–76 (MHEL…TAAG), 91–185 (NQVK…QQDV), and 241–260 (ASPTVQQKSPRSLSNSSASS). Composition is skewed to low complexity over residues 12-47 (SSSSSSSSSSNMTDVSAAAGGATAPAETAATSSSAS) and 57-76 (TSTAMAAPTTTPTTAATAAG). Positions 109 to 124 (APYPPVPAAKPKPTPT) are enriched in pro residues. Basic and acidic residues predominate over residues 129-140 (SKFKSTSREVDV). Polar residues predominate over residues 147-166 (ARSSTISPGVSIHTQTIQQE). Composition is skewed to low complexity over residues 167–180 (SSSAKPGMSSSSSS) and 249–260 (SPRSLSNSSASS). GAF domains are found at residues 290-442 (DIDV…GIGI) and 474-658 (NLEC…GLGI). In terms of domain architecture, PDEase spans 688 to 1119 (SQDQTEKLTQ…RNWQDLAEKV (432 aa)). The active-site Proton donor is His-764. 4 residues coordinate a divalent metal cation: His-768, His-804, Asp-805, and Asp-1023. Disordered stretches follow at residues 1162-1193 (AQHGAGAGGDDSHTPEHQRSGSRLSMKKTGAL) and 1205-1276 (LYNS…CSLL). 2 stretches are compositionally biased toward basic and acidic residues: residues 1171 to 1180 (DDSHTPEHQR) and 1221 to 1233 (LESHVSEDMDDKS). A compositionally biased stretch (low complexity) spans 1248–1263 (GRMSASSSTSSAGTVV). Positions 1266 to 1276 (SKKRSKLCSLL) are enriched in basic residues. Position 1273 is a cysteine methyl ester (Cys-1273). The S-farnesyl cysteine moiety is linked to residue Cys-1273. The propeptide at 1274–1276 (SLL) is removed in mature form.

Belongs to the cyclic nucleotide phosphodiesterase family. In terms of assembly, interacts with PrBP. Requires a divalent metal cation as cofactor.

It is found in the cell membrane. The enzyme catalyses 3',5'-cyclic GMP + H2O = GMP + H(+). Has a role regulating cGMP transport in Malpighian tubule principal cells. This is cGMP-specific 3',5'-cyclic phosphodiesterase from Drosophila persimilis (Fruit fly).